Here is a 98-residue protein sequence, read N- to C-terminus: Feather keratin 4 (98 aa).

Ser-2 carries the post-translational modification N-acetylserine.

Belongs to the avian keratin family. In terms of assembly, the avian keratins (F-ker, S-ker, C-ker and B-ker) are a complex mixture of very similar polypeptides.

This Gallus gallus (Chicken) protein is Feather keratin 4.